Reading from the N-terminus, the 105-residue chain is Met repressor (105 aa).

It belongs to the MetJ family. As to quaternary structure, homodimer.

The protein resides in the cytoplasm. Functionally, this regulatory protein, when combined with SAM (S-adenosylmethionine) represses the expression of the methionine regulon and of enzymes involved in SAM synthesis. This chain is Met repressor, found in Actinobacillus pleuropneumoniae serotype 7 (strain AP76).